Consider the following 450-residue polypeptide: Sorting nexin-4 (450 aa).

M1 bears the N-acetylmethionine mark. The disordered stretch occupies residues 1–46 (MEQAPPDPEKLLQPGPLEPLGGPGAVLEAAVGEENEGTREDGSGVD). Residues 11–20 (LLQPGPLEPL) are compositionally biased toward low complexity. Residues 61-187 (SVSEAEKRTG…YSFLTQEGNW (127 aa)) form the PX domain. A 1,2-diacyl-sn-glycero-3-phospho-(1D-myo-inositol-3-phosphate) contacts are provided by R106, S108, K132, and R154.

The protein belongs to the sorting nexin family. Heterodimer; heterodimerizes with SNX7 or SNX30. Interacts with WWC1/KIBRA. Identified in a complex with WWC1/KIBRA and dynein components DYNLL1 and DYNC1I2. Interacts with BIN1.

Its subcellular location is the early endosome. It localises to the early endosome membrane. In terms of biological role, involved in the regulation of endocytosis and in several stages of intracellular trafficking. Plays a role in recycling endocytosed transferrin receptor and prevent its degradation. Involved in autophagosome assembly by regulating trafficking and recycling of phospholipid scramblase ATG9A. This chain is Sorting nexin-4, found in Mus musculus (Mouse).